The sequence spans 465 residues: Juvenile hormone epoxide hydrolase 2 (465 aa).

The helical transmembrane segment at Ile7–Phe27 threads the bilayer. The active-site Nucleophile is Asp224. Tyr370 functions as the Proton donor in the catalytic mechanism. The active-site Proton acceptor is the His427.

This sequence belongs to the peptidase S33 family.

It localises to the microsome membrane. Its subcellular location is the endoplasmic reticulum membrane. The enzyme catalyses cis-stilbene oxide + H2O = (1R,2R)-hydrobenzoin. The catalysed reaction is 1-(4-methoxyphenyl)-N-methyl-N-[(3-methyloxetan-3-yl)methyl]methanamine + H2O = 2-{[(4-methoxybenzyl)(methyl)amino]methyl}-2-methylpropane-1,3-diol. In terms of biological role, catalyzes juvenile hormone hydrolysis. The sequence is that of Juvenile hormone epoxide hydrolase 2 from Ctenocephalides felis (Cat flea).